The sequence spans 102 residues: UPF0328 protein ECU10_1820 (102 aa).

It belongs to the UPF0328 family.

This Encephalitozoon cuniculi (strain GB-M1) (Microsporidian parasite) protein is UPF0328 protein ECU10_1820.